A 194-amino-acid polypeptide reads, in one-letter code: MRLCDTDIERYLDEGIIEITPRPGNEKINGATIDLRLGNSFRVFRDYSAPYIDVSGPREEVSAQLDRVMSDEIIIRDDEPFFLHPGVLALATTLESVRLPDNIIGWLDGRSSLARLGLMVHVTAHRIDPGWEGRIVLEFYNSGKLPLALRPNMIIGALSFEILSNHAARPYNRRRDAKYKNQQSAVASRINQDE.

DCTP-binding positions include 110–115 (RSSLAR), D128, 136–138 (VLE), Y171, K178, and Q182. Residue E138 is the Proton donor/acceptor of the active site.

It belongs to the dCTP deaminase family. Homotrimer.

The enzyme catalyses dCTP + H2O + H(+) = dUTP + NH4(+). It functions in the pathway pyrimidine metabolism; dUMP biosynthesis; dUMP from dCTP (dUTP route): step 1/2. Catalyzes the deamination of dCTP to dUTP. The chain is dCTP deaminase from Mannheimia succiniciproducens (strain KCTC 0769BP / MBEL55E).